A 130-amino-acid chain; its full sequence is Ribonuclease P protein component 2 (130 aa).

Belongs to the eukaryotic/archaeal RNase P protein component 2 family. As to quaternary structure, consists of a catalytic RNA component and at least 4-5 protein subunits.

It localises to the cytoplasm. The enzyme catalyses Endonucleolytic cleavage of RNA, removing 5'-extranucleotides from tRNA precursor.. Part of ribonuclease P, a protein complex that generates mature tRNA molecules by cleaving their 5'-ends. The chain is Ribonuclease P protein component 2 from Methanococcus maripaludis (strain C6 / ATCC BAA-1332).